Consider the following 625-residue polypeptide: pH-response transcription factor pacC/RIM101 (625 aa).

The span at Met1–Ser34 shows a compositional bias: low complexity. Residues Met1 to Ile35 are disordered. C2H2-type zinc fingers lie at residues Leu45–His70, Leu81–His105, and His111–His133. Positions Ala391–Val416 are enriched in polar residues. The disordered stretch occupies residues Ala391–Ser440. The span at Ser417–Ser438 shows a compositional bias: low complexity. A YPX[LI] motif 1 motif is present at residues Tyr444 to Leu447. Disordered stretches follow at residues Ser455 to Val543 and Val584 to Glu625. 2 stretches are compositionally biased toward polar residues: residues Thr461–Asp472 and Gly490–Glu514. The YPX[LI] motif 2 motif lies at Tyr615 to Leu618.

It belongs to the pacC/RIM101 family. Post-translationally, activated by C-terminal proteolytic cleavage by signaling protease (probably palB/RIM13) at neutral to alkaline ambient pH.

The protein localises to the cytoplasm. The protein resides in the nucleus. Its function is as follows. Transcription factor that mediates regulation of both acid- and alkaline-expressed genes in response to ambient pH. At alkaline ambient pH, activates transcription of alkaline-expressed genes (including pac1 itself) and represses transcription of acid-expressed genes. The sequence is that of pH-response transcription factor pacC/RIM101 (pac1) from Sclerotinia sclerotiorum (White mold).